A 205-amino-acid chain; its full sequence is Guanylate kinase (205 aa).

The Guanylate kinase-like domain maps to Pro17 to Leu195. Gly24 to Ser31 lines the ATP pocket.

Belongs to the guanylate kinase family.

Its subcellular location is the cytoplasm. It carries out the reaction GMP + ATP = GDP + ADP. In terms of biological role, essential for recycling GMP and indirectly, cGMP. The sequence is that of Guanylate kinase from Streptomyces kasugaensis.